The chain runs to 246 residues: Probable chemoreceptor glutamine deamidase CheD (246 aa).

The interval 225 to 246 (GAGVQPAVQKAASPYAANLSRK) is disordered.

Belongs to the CheD family.

The enzyme catalyses L-glutaminyl-[protein] + H2O = L-glutamyl-[protein] + NH4(+). Functionally, probably deamidates glutamine residues to glutamate on methyl-accepting chemotaxis receptors (MCPs), playing an important role in chemotaxis. This Burkholderia vietnamiensis (strain G4 / LMG 22486) (Burkholderia cepacia (strain R1808)) protein is Probable chemoreceptor glutamine deamidase CheD.